A 464-amino-acid polypeptide reads, in one-letter code: NADH-quinone oxidoreductase subunit N 1 (464 aa).

14 helical membrane passes run 6–26 (ILPE…ELFL), 33–53 (FLSV…FFVN), 65–85 (VDAL…FVLL), 98–118 (YGEL…MISS), 122–142 (AIIF…VGLF), 155–175 (YLVI…LVYA), 192–212 (FALG…AVPF), 237–257 (IGMY…FPDW), 259–279 (YVVM…AYAQ), 285–305 (LLAY…TAVD), 312–332 (LLFY…VLAI), 356–376 (LASM…AAVF), 401–421 (ASLI…LYSG), and 436–456 (FTVL…HVVL).

Belongs to the complex I subunit 2 family. As to quaternary structure, NDH-1 is composed of 14 different subunits. Subunits NuoA, H, J, K, L, M, N constitute the membrane sector of the complex.

The protein localises to the cell inner membrane. The enzyme catalyses a quinone + NADH + 5 H(+)(in) = a quinol + NAD(+) + 4 H(+)(out). Its function is as follows. NDH-1 shuttles electrons from NADH, via FMN and iron-sulfur (Fe-S) centers, to quinones in the respiratory chain. The immediate electron acceptor for the enzyme in this species is believed to be ubiquinone. Couples the redox reaction to proton translocation (for every two electrons transferred, four hydrogen ions are translocated across the cytoplasmic membrane), and thus conserves the redox energy in a proton gradient. The sequence is that of NADH-quinone oxidoreductase subunit N 1 from Aquifex aeolicus (strain VF5).